A 556-amino-acid polypeptide reads, in one-letter code: Endoglucanase 22 (556 aa).

The N-terminal stretch at 1 to 33 (MSRGRARLQPPPPGTRTTTLAAVLVLVLLAVVA) is a signal peptide. Catalysis depends on Asp108, which acts as the Nucleophile. Active-site residues include His450, Asp502, and Glu511.

The protein belongs to the glycosyl hydrolase 9 (cellulase E) family.

The protein resides in the secreted. The catalysed reaction is Endohydrolysis of (1-&gt;4)-beta-D-glucosidic linkages in cellulose, lichenin and cereal beta-D-glucans.. The polypeptide is Endoglucanase 22 (GLU11) (Oryza sativa subsp. japonica (Rice)).